The following is a 141-amino-acid chain: Hemoglobin subunit alpha-A (141 aa).

One can recognise a Globin domain in the interval 1–141 (VLSSHDKSNV…VGTVLTAKYR (141 aa)). O2 is bound at residue histidine 58. Histidine 87 is a binding site for heme b.

The protein belongs to the globin family. Heterotetramer of two alpha chains and two beta chains. Red blood cells.

Its function is as follows. Involved in oxygen transport from the lung to the various peripheral tissues. The polypeptide is Hemoglobin subunit alpha-A (HBAA) (Phoenicopterus ruber (American flamingo)).